The primary structure comprises 226 residues: AN1-type zinc finger protein 3 homolog (226 aa).

An A20-type zinc finger spans residues 12-44 (PSLPPRCPCGFWGSSKTMNLCSKCFADFQKKQP). Residues cysteine 18, cysteine 20, cysteine 32, and cysteine 35 each contribute to the Zn(2+) site. The disordered stretch occupies residues 42–149 (KQPDEDTAPS…DRPDNSSRSK (108 aa)). 3 stretches are compositionally biased toward polar residues: residues 49–59 (APSTSSSQSDL), 67–92 (DNGNTSIPTPTVNPTQQLPTELNVDS), and 105–114 (AHVSLTTPSK). A compositionally biased stretch (basic and acidic residues) spans 134–146 (RLLDSGDRPDNSS). Residues 150-199 (QKSRRRCFRCQIKLELVQQELGSCRCGYVFCMLHRLPEQHDCTFDHMGRG) form an AN1-type zinc finger. Residues cysteine 156, cysteine 159, cysteine 173, cysteine 175, cysteine 180, histidine 183, histidine 189, and cysteine 191 each contribute to the Zn(2+) site.

The chain is AN1-type zinc finger protein 3 homolog (zfand3) from Xenopus laevis (African clawed frog).